The following is a 463-amino-acid chain: Type I restriction enzyme StySPI specificity subunit (463 aa).

This sequence belongs to the type-I restriction system S methylase family. In terms of assembly, the type I restriction/modification system is composed of three polypeptides R, M and S; the restriction enzyme has stoichiometry R(2)M(2)S(1) while the methyltransferase is M(2)S(1).

Functionally, the specificity (S) subunit of a type I restriction enzyme; this subunit dictates DNA sequence specificity. The M and S subunits together form a methyltransferase (MTase) that methylates A-2 on the top strand and A-3 on the bottom strand of the sequence 5'-AACN(6)GTRC-3'. In the presence of the R subunit the complex can also act as an endonuclease, binding to the same target sequence but cutting the DNA some distance from this site. Whether the DNA is cut or modified depends on the methylation state of the target sequence. When the target site is unmodified, the DNA is cut. When the target site is hemimethylated, the complex acts as a maintenance MTase modifying the DNA so that both strands become methylated. After locating a non-methylated recognition site, the enzyme complex serves as a molecular motor that translocates DNA in an ATP-dependent manner until a collision occurs that triggers cleavage. The sequence is that of Type I restriction enzyme StySPI specificity subunit from Salmonella potsdam.